A 519-amino-acid chain; its full sequence is Putative ATP-dependent RNA helicase L396 (519 aa).

Residues 110-258 (IKGMEEGGGG…IINWYMGPIL (149 aa)) enclose the Helicase ATP-binding domain. Residue 123–130 (MGCGSGKT) coordinates ATP. Positions 211-214 (DEVH) match the DEAH box motif. Residues 317–457 (YLIQELFDMG…KQKYNIQKYY (141 aa)) enclose the Helicase C-terminal domain.

It belongs to the DEAD box helicase family. DEAH subfamily.

The catalysed reaction is ATP + H2O = ADP + phosphate + H(+). This chain is Putative ATP-dependent RNA helicase L396, found in Acanthamoeba polyphaga (Amoeba).